Here is a 194-residue protein sequence, read N- to C-terminus: Oligoribonuclease (194 aa).

The region spanning 11–174 is the Exonuclease domain; it reads LIWIDLEMTG…SDVRDSINEL (164 aa). Residue tyrosine 132 is part of the active site.

Belongs to the oligoribonuclease family.

It is found in the cytoplasm. In terms of biological role, 3'-to-5' exoribonuclease specific for small oligoribonucleotides. The sequence is that of Oligoribonuclease from Xanthomonas oryzae pv. oryzae (strain MAFF 311018).